We begin with the raw amino-acid sequence, 297 residues long: MKSRTIWTIILGALLVCCIAVAYTLTKSQAGASSSGESIATIGGKSVTREEWLKEMEDQYGKSTLEDMINVRVVEQLAKKNKLKISKSEVDREFLLIKAVNNSFYEDEHTTEKEWKDQIRYNILLEDLLTRDIDISNKELESFYNKNKELYQFDDSYRIRHIVVKDEEEAREVLKELKGGSSFEAVAAERSTDRYTSPYGGDLGFVTEASDNIPSAYIEEAKTLKEDEWSQEPIKVSNGYAIIQLKEKLKARTFSFDEVKDQIRRQIAMDQLGDKATVKTLWKEADVSWFYGEKSTK.

Positions 1 to 32 are cleaved as a signal peptide; that stretch reads MKSRTIWTIILGALLVCCIAVAYTLTKSQAGA. A PpiC domain is found at 154–247; it reads DDSYRIRHIV…NGYAIIQLKE (94 aa).

The catalysed reaction is [protein]-peptidylproline (omega=180) = [protein]-peptidylproline (omega=0). The polypeptide is Putative peptidyl-prolyl cis-trans isomerase YacD (yacD) (Bacillus subtilis (strain 168)).